The primary structure comprises 469 residues: Glutamate--tRNA ligase 2 (469 aa).

The short motif at 8 to 18 (PSPTGFLHVGG) is the 'HIGH' region element. Positions 250 to 254 (KLSKR) match the 'KMSKS' region motif. Lys253 is an ATP binding site.

It belongs to the class-I aminoacyl-tRNA synthetase family. Glutamate--tRNA ligase type 1 subfamily. Monomer.

The protein localises to the cytoplasm. The catalysed reaction is tRNA(Glu) + L-glutamate + ATP = L-glutamyl-tRNA(Glu) + AMP + diphosphate. In terms of biological role, catalyzes the attachment of glutamate to tRNA(Glu) in a two-step reaction: glutamate is first activated by ATP to form Glu-AMP and then transferred to the acceptor end of tRNA(Glu). The sequence is that of Glutamate--tRNA ligase 2 from Thermotoga sp. (strain RQ2).